The chain runs to 303 residues: MTKPLTISQVQPKITLQWRAYFEMTKPKVVALMLLTVLVGMCLSVPGIVPLQPLVAGMAGIAMMAGSAAAFNHLIDRKIDGLMARTYNRPLPKGKISTTKAVTFAVSLGSLGFVVLYTLVNPLTAWLTFASLIGYALVYTAYLKRATSQNIVIGGLAGAMPPLLGWTAITNELHGYALLLVIIIFTWTPPHFWALAIHRRKEYAKVDIPMLPVTHGVEFTKTCILLYTILLAIACLLPVLVGMCGPIYLVGSTVLSCGFIYKAWQLKFHDYPELSMQVFKFSIYHLMVLFIVLLVDHYFWVNA.

The next 9 membrane-spanning stretches (helical) occupy residues valine 29 to valine 49, leucine 51 to phenylalanine 71, isoleucine 96 to threonine 118, leucine 123 to leucine 143, asparagine 150 to threonine 170, alanine 177 to isoleucine 197, cysteine 223 to methionine 243, cysteine 244 to tryptophan 264, and phenylalanine 281 to valine 301.

The protein belongs to the UbiA prenyltransferase family. Protoheme IX farnesyltransferase subfamily.

Its subcellular location is the cell inner membrane. It catalyses the reaction heme b + (2E,6E)-farnesyl diphosphate + H2O = Fe(II)-heme o + diphosphate. The protein operates within porphyrin-containing compound metabolism; heme O biosynthesis; heme O from protoheme: step 1/1. Its function is as follows. Converts heme B (protoheme IX) to heme O by substitution of the vinyl group on carbon 2 of heme B porphyrin ring with a hydroxyethyl farnesyl side group. The protein is Protoheme IX farnesyltransferase 2 of Shewanella frigidimarina (strain NCIMB 400).